Here is a 255-residue protein sequence, read N- to C-terminus: MAVGKNKRLSKGKKGLKKRTQDPFSRKDEYSVKAPSTFAIRDVGKTLVNRTTGLKNANDALKGRIFEVSLADLQNDEDHAFRKVKLRVDEVQGKNCLTNFHGLDFTSDKLRSLVRKWQTLIEANVTVKTTDDYLLRLFAIAFTKRRPNQIKKTTYAQSSQIRAIRKKMVEIIQREAGTRSLAQLTKLIPEVIGREIEKATHGIYPLQNVHIRKVKLLKSPKFDLGALLALHGESSTDDKGQKVEREFKETVLESV.

The segment covering 1–18 has biased composition (basic residues); the sequence is MAVGKNKRLSKGKKGLKK. The segment at 1 to 28 is disordered; sequence MAVGKNKRLSKGKKGLKKRTQDPFSRKD. A2 bears the N-acetylalanine; partial mark. Basic and acidic residues predominate over residues 19–28; that stretch reads RTQDPFSRKD.

This sequence belongs to the eukaryotic ribosomal protein eS1 family. In terms of assembly, component of the small ribosomal subunit. Mature ribosomes consist of a small (40S) and a large (60S) subunit. The 40S subunit contains about 33 different proteins and 1 molecule of RNA (18S). The 60S subunit contains about 49 different proteins and 3 molecules of RNA (25S, 5.8S and 5S).

The protein resides in the cytoplasm. This is Small ribosomal subunit protein eS1 from Paracoccidioides lutzii (strain ATCC MYA-826 / Pb01) (Paracoccidioides brasiliensis).